The following is a 209-amino-acid chain: Large ribosomal subunit protein uL3 (209 aa).

The tract at residues Arg-125 to Pro-148 is disordered.

This sequence belongs to the universal ribosomal protein uL3 family. Part of the 50S ribosomal subunit. Forms a cluster with proteins L14 and L19.

Functionally, one of the primary rRNA binding proteins, it binds directly near the 3'-end of the 23S rRNA, where it nucleates assembly of the 50S subunit. This Lysinibacillus sphaericus (strain C3-41) protein is Large ribosomal subunit protein uL3.